The chain runs to 203 residues: Histidine biosynthesis bifunctional protein HisIE (203 aa).

Residues 1–114 (MLTEQQRREL…FGNTAHQWLF (114 aa)) form a phosphoribosyl-AMP cyclohydrolase region. The segment at 115-203 (LYQLEQLLAE…VIENLHKRHQ (89 aa)) is phosphoribosyl-ATP pyrophosphohydrolase.

In the N-terminal section; belongs to the PRA-CH family. It in the C-terminal section; belongs to the PRA-PH family.

It localises to the cytoplasm. The catalysed reaction is 1-(5-phospho-beta-D-ribosyl)-ATP + H2O = 1-(5-phospho-beta-D-ribosyl)-5'-AMP + diphosphate + H(+). The enzyme catalyses 1-(5-phospho-beta-D-ribosyl)-5'-AMP + H2O = 1-(5-phospho-beta-D-ribosyl)-5-[(5-phospho-beta-D-ribosylamino)methylideneamino]imidazole-4-carboxamide. It functions in the pathway amino-acid biosynthesis; L-histidine biosynthesis; L-histidine from 5-phospho-alpha-D-ribose 1-diphosphate: step 2/9. Its pathway is amino-acid biosynthesis; L-histidine biosynthesis; L-histidine from 5-phospho-alpha-D-ribose 1-diphosphate: step 3/9. The protein is Histidine biosynthesis bifunctional protein HisIE (hisI) of Shigella flexneri.